A 227-amino-acid polypeptide reads, in one-letter code: Casparian strip membrane protein 2 (227 aa).

Over 1-59 (MSSTSEATVIHMDGAAGKTPATAVPPPPPPAPTAPVQQQRKAGGVPFLLRSGAEGFRRC) the chain is Cytoplasmic. The segment at 17-37 (GKTPATAVPPPPPPAPTAPVQ) is disordered. The span at 23 to 33 (AVPPPPPPAPT) shows a compositional bias: pro residues. A helical transmembrane segment spans residues 60–80 (MALLDLLLRVAAMGPTLAAAI). Topologically, residues 81–107 (STGTSDETLSVFTHYFQFRARFDDFSA) are extracellular. A helical transmembrane segment spans residues 108 to 128 (FTFFMVANAVAAGYLLMSLPF). The Cytoplasmic portion of the chain corresponds to 129–149 (SAFGVIRPKATSVRLLLLICD). A helical membrane pass occupies residues 150–170 (TIMVVLVTAAASAAAAIVYVA). The Extracellular portion of the chain corresponds to 171–197 (HEGNRRANWVPICMQFHGFCKRTSGAV). Residues 198-218 (VASFLAVLIFILLVFLGACAI) traverse the membrane as a helical segment. At 219–227 (RRRHTTTKH) the chain is on the cytoplasmic side.

This sequence belongs to the Casparian strip membrane proteins (CASP) family. Homodimer and heterodimers.

Its subcellular location is the cell membrane. Regulates membrane-cell wall junctions and localized cell wall deposition. Required for establishment of the Casparian strip membrane domain (CSD) and the subsequent formation of Casparian strips, a cell wall modification of the root endodermis that determines an apoplastic barrier between the intraorganismal apoplasm and the extraorganismal apoplasm and prevents lateral diffusion. This is Casparian strip membrane protein 2 from Brachypodium distachyon (Purple false brome).